Reading from the N-terminus, the 627-residue chain is Zinc finger MYM-type protein 5 (627 aa).

Residues 1 to 23 (MEAHLADMESSGGPTSSLAGTSR) form a disordered region. Positions 12–23 (GGPTSSLAGTSR) are enriched in polar residues. Lys59 participates in a covalent cross-link: Glycyl lysine isopeptide (Lys-Gly) (interchain with G-Cter in SUMO2). Residues 91-123 (DDEGDTDTNGGEEKNPTDFIEWGPNGNKSSTKN) form a disordered region. Residues Lys137 and Lys195 each participate in a glycyl lysine isopeptide (Lys-Gly) (interchain with G-Cter in SUMO2) cross-link. The MYM-type 1 zinc-finger motif lies at 234–268 (HLFCSTTCLSSFSHKRTRKTRNVMCKKDSPVRTTT). The segment at 280–319 (QGFYNASLSPYENCQSLRKEVFTKSRCIICNKLGEVRHEI) adopts an MYM-type 2; degenerate zinc-finger fold. 2 MYM-type zinc fingers span residues 326 to 354 (HKLC…CSKY) and 370 to 396 (KRFC…LLQN). A disordered region spans residues 405-429 (ENEKRLRESSGTLSGNTGDIPEKKE). Glycyl lysine isopeptide (Lys-Gly) (interchain with G-Cter in SUMO2) cross-links involve residues Lys408, Lys427, and Lys517.

As to quaternary structure, interacts (via N-terminal 120 amino acid region) with ETV5 (via C-terminal).

The protein localises to the nucleus. In terms of biological role, functions as a transcriptional regulator. This Mus musculus (Mouse) protein is Zinc finger MYM-type protein 5 (Zmym5).